The chain runs to 275 residues: MTQQLQSLIDQAWEDRANLSPKSAPADVREAVANVIGQLDRGALRVAEKQDGEWIVNQWIKKAVLLSFRLEDNAPMAAGGFTQFYDKVPSKFANYTAEDFAAGGFRVVPPAVARRGSFIAKNAVLMPSYVNIGAYVDEGTMVDTWATVGSCAQIGKNVHLSGGVGIGGVLEPLQANPVIIEDNCFIGARSEVVEGVIVEENSVISMGVYLGQSTKIYDRETGEVSYGRIPAGSVVVAGNLPSKDGSHSLYCAVIVKKVDAKTRAKVGLNELLRGD.

Belongs to the transferase hexapeptide repeat family.

It localises to the cytoplasm. It catalyses the reaction (S)-2,3,4,5-tetrahydrodipicolinate + succinyl-CoA + H2O = (S)-2-succinylamino-6-oxoheptanedioate + CoA. It participates in amino-acid biosynthesis; L-lysine biosynthesis via DAP pathway; LL-2,6-diaminopimelate from (S)-tetrahydrodipicolinate (succinylase route): step 1/3. The polypeptide is 2,3,4,5-tetrahydropyridine-2,6-dicarboxylate N-succinyltransferase (Ralstonia pickettii (strain 12J)).